A 290-amino-acid polypeptide reads, in one-letter code: Ribosomal RNA small subunit methyltransferase A (290 aa).

Residues Asn-27, Leu-29, Gly-54, Glu-75, Asp-100, and Asn-125 each contribute to the S-adenosyl-L-methionine site.

This sequence belongs to the class I-like SAM-binding methyltransferase superfamily. rRNA adenine N(6)-methyltransferase family. RsmA subfamily.

Its subcellular location is the cytoplasm. It catalyses the reaction adenosine(1518)/adenosine(1519) in 16S rRNA + 4 S-adenosyl-L-methionine = N(6)-dimethyladenosine(1518)/N(6)-dimethyladenosine(1519) in 16S rRNA + 4 S-adenosyl-L-homocysteine + 4 H(+). In terms of biological role, specifically dimethylates two adjacent adenosines (A1518 and A1519) in the loop of a conserved hairpin near the 3'-end of 16S rRNA in the 30S particle. May play a critical role in biogenesis of 30S subunits. In Streptococcus sanguinis (strain SK36), this protein is Ribosomal RNA small subunit methyltransferase A.